Here is a 1334-residue protein sequence, read N- to C-terminus: Aldehyde oxidase 4 (1334 aa).

The region spanning 6-93 (DELIFFVNGK…GAAVTTVEGV (88 aa)) is the 2Fe-2S ferredoxin-type domain. Residues Cys-45, Cys-50, Cys-53, and Cys-75 each coordinate [2Fe-2S] cluster. A Mo-molybdopterin-binding site is contributed by Gln-114. Residues Cys-115, Cys-118, Cys-150, and Cys-152 each contribute to the [2Fe-2S] cluster site. Cys-152 serves as a coordination point for Mo-molybdopterin. Positions 235-421 (FQGERTIWIM…LSVFIPYSGQ (187 aa)) constitute an FAD-binding PCMH-type domain. FAD contacts are provided by residues 263–270 (LVMGNTAV), Ala-345, Thr-354, His-358, Asp-367, and Ala-411. Mo-molybdopterin contacts are provided by residues Ala-802, 802–803 (AF), Leu-1043, 1084–1087 (GSMG), Gln-1199, and Leu-1263. Glu-1265 acts as the Proton acceptor; for azaheterocycle hydroxylase activity in catalysis.

The protein belongs to the xanthine dehydrogenase family. As to quaternary structure, homodimer. [2Fe-2S] cluster serves as cofactor. It depends on FAD as a cofactor. The cofactor is Mo-molybdopterin.

Its subcellular location is the cytoplasm. The catalysed reaction is an aldehyde + O2 + H2O = a carboxylate + H2O2 + H(+). It carries out the reaction retinal + O2 + H2O = retinoate + H2O2 + H(+). Aldehyde oxidase able to catalyze the oxidation of retinaldehyde into retinoate. Acts as a negative modulator of the epidermal trophism. May be able to oxidize a wide variety of aldehydes into their corresponding carboxylates and to hydroxylate azaheterocycles. The chain is Aldehyde oxidase 4 (Aox4) from Rattus norvegicus (Rat).